A 152-amino-acid polypeptide reads, in one-letter code: Large ribosomal subunit protein uL15 (152 aa).

Positions 1 to 66 (MLQLHTIKPN…PLHRRLPKKG (66 aa)) are disordered. The span at 24 to 36 (ESSGLGKTCGKGN) shows a compositional bias: gly residues.

Belongs to the universal ribosomal protein uL15 family. As to quaternary structure, part of the 50S ribosomal subunit.

Its function is as follows. Binds to the 23S rRNA. The chain is Large ribosomal subunit protein uL15 from Akkermansia muciniphila (strain ATCC BAA-835 / DSM 22959 / JCM 33894 / BCRC 81048 / CCUG 64013 / CIP 107961 / Muc).